Reading from the N-terminus, the 457-residue chain is UDP-N-acetyl-alpha-D-muramoyl-L-alanyl-L-glutamate epimerase (457 aa).

The protein belongs to the MurL family.

The catalysed reaction is UDP-N-acetyl-alpha-D-muramoyl-L-alanyl-L-glutamate + ATP + H2O = UDP-N-acetyl-alpha-D-muramoyl-L-alanyl-D-glutamate + AMP + diphosphate + H(+). It functions in the pathway cell wall biogenesis; peptidoglycan biosynthesis. In terms of biological role, cell wall formation. Catalyzes epimerization of the terminal L-glutamate in UDP-N-acetyl-alpha-D-muramoyl-L-alanyl-L-glutamate. In Salinispora tropica (strain ATCC BAA-916 / DSM 44818 / JCM 13857 / NBRC 105044 / CNB-440), this protein is UDP-N-acetyl-alpha-D-muramoyl-L-alanyl-L-glutamate epimerase.